A 634-amino-acid polypeptide reads, in one-letter code: 3-dehydroshikimate dehydratase (634 aa).

E134, D165, Q191, and E239 together coordinate a divalent metal cation. VOC domains are found at residues 295–414 (GIEF…LVER) and 440–590 (RVDH…VFTE). Mg(2+)-binding residues include H443, H521, and E599.

The protein belongs to the bacterial two-domain DSD family. As to quaternary structure, homodimer. Co(2+) is required as a cofactor. The cofactor is Ni(2+). Mg(2+) serves as cofactor. It depends on Mn(2+) as a cofactor.

It catalyses the reaction 3-dehydroshikimate = 3,4-dihydroxybenzoate + H2O. The protein operates within aromatic compound metabolism; 3,4-dihydroxybenzoate biosynthesis. Catalyzes the conversion of 3-dehydroshikimate to protocatechuate (3,4-dihydroxybenzoate), a common intermediate of quinate and shikimate degradation pathways. Is required for growth on either quinate or shikimate as a sole carbon source. The polypeptide is 3-dehydroshikimate dehydratase (Pseudomonas aeruginosa (strain ATCC 15692 / DSM 22644 / CIP 104116 / JCM 14847 / LMG 12228 / 1C / PRS 101 / PAO1)).